A 145-amino-acid polypeptide reads, in one-letter code: Hemoglobin fetal subunit beta (145 aa).

Residues 1-145 (MLSAEEKASV…VANALAHRYH (145 aa)) enclose the Globin domain. 2 residues coordinate heme b: histidine 62 and histidine 91.

Belongs to the globin family. As to quaternary structure, heterotetramer of two alpha chains and two beta chains. In terms of tissue distribution, red blood cells.

Its function is as follows. Involved in oxygen transport from the lung to the various peripheral tissues. The polypeptide is Hemoglobin fetal subunit beta (Capra hircus (Goat)).